Here is a 612-residue protein sequence, read N- to C-terminus: Poly(A) RNA polymerase, mitochondrial (612 aa).

Residues 1-57 (MNSLVRRSAQQLSLWRTYCIKHNASEAASPGRNAGRPNYEEFIGRHQRQAQCSIVVQ) constitute a mitochondrion transit peptide. ATP-binding positions include 83 to 89 (YCVRQDE) and 228 to 229 (GC). The Mg(2+) site is built by aspartate 230 and aspartate 232. Residues 427–463 (SLSELLLQFFEFYSQFDFHNRAISLNEGKPLSKPDHS) enclose the PAP-associated domain. 2 disordered regions span residues 555–574 (AGAT…KSAS) and 588–612 (SELK…RRSR).

It belongs to the DNA polymerase type-B-like family. It depends on Mg(2+) as a cofactor. Mn(2+) is required as a cofactor.

The protein resides in the mitochondrion. It carries out the reaction RNA(n) + ATP = RNA(n)-3'-adenine ribonucleotide + diphosphate. In terms of biological role, polymerase that creates the 3' poly(A) tail of mitochondrial transcripts. This is not required for transcript stability or translation but may maintain mRNA integrity by protecting 3' termini from degradation. This chain is Poly(A) RNA polymerase, mitochondrial, found in Drosophila melanogaster (Fruit fly).